We begin with the raw amino-acid sequence, 39 residues long: Photosystem II reaction center protein Y (39 aa).

A helical transmembrane segment spans residues 5 to 23 (VLVVVGPLLIAASWAVFNI).

The protein belongs to the PsbY family. PSII is composed of 1 copy each of membrane proteins PsbA, PsbB, PsbC, PsbD, PsbE, PsbF, PsbH, PsbI, PsbJ, PsbK, PsbL, PsbM, PsbT, PsbX, PsbY, PsbZ, Psb30/Ycf12, peripheral proteins PsbO, CyanoQ (PsbQ), PsbU, PsbV and a large number of cofactors. It forms dimeric complexes.

Its subcellular location is the cellular thylakoid membrane. Its function is as follows. Loosely associated component of the core of photosystem II (PSII), it is not always seen in crystals. PSII is a light-driven water plastoquinone oxidoreductase, using light energy to abstract electrons from H(2)O, generating a proton gradient subsequently used for ATP formation. The protein is Photosystem II reaction center protein Y of Rippkaea orientalis (strain PCC 8801 / RF-1) (Cyanothece sp. (strain PCC 8801)).